The following is a 499-amino-acid chain: Probable lipid II flippase MurJ (499 aa).

The next 14 helical transmembrane spans lie at 4-24 (LFRASLLFSLGILLSRIFGYV), 26-46 (DATVAYYFGASAVSDAFFIAF), 88-108 (LLITFSLSVVIIGLLFPEEII), 130-150 (FTILYLPLVSFYAYSMAILLV), 154-174 (FFVPSVSQTLFNLGFILSLVI), 184-204 (LALAVLIGGLFQIIPNTFLLF), 227-247 (FLFTLGGFSANQLSLFVDTFL), 265-285 (IYLLPISLFSISLSNTLLALV), 297-317 (TALKLTLMLSIPSSFGLFFLS), 335-355 (LFYTSGLLSLYAFSVPFYSLQ), 375-395 (AFLSVFLEALFGSVFIFLLNF), 396-416 (GVYSFPLAALISSSSVLVYLY), 425-445 (IPFGNLIKYLIASSFMGGLVY), and 455-475 (FILVSFIPIYALFYYVFLIIL).

Belongs to the MurJ/MviN family.

Its subcellular location is the cell inner membrane. It participates in cell wall biogenesis; peptidoglycan biosynthesis. Functionally, involved in peptidoglycan biosynthesis. Transports lipid-linked peptidoglycan precursors from the inner to the outer leaflet of the cytoplasmic membrane. In Aquifex aeolicus (strain VF5), this protein is Probable lipid II flippase MurJ.